The chain runs to 319 residues: RNA polymerase II holoenzyme cyclin-like subunit (319 aa).

The region spanning 53 to 142 (QQLIRLAKRL…LGECEFFMIS (90 aa)) is the Cyclin N-terminal domain. Residues 237–251 (QGQQAQGGMPEPAAA) show a composition bias toward low complexity. Positions 237–261 (QGQQAQGGMPEPAAAEPKEKRQQDR) are disordered. A compositionally biased stretch (basic and acidic residues) spans 252 to 261 (EPKEKRQQDR).

It belongs to the cyclin family. Cyclin C subfamily. In terms of assembly, component of the SRB8-11 complex, a regulatory module of the Mediator complex. Interacts with SSN3/FCK1.

It is found in the nucleus. Its function is as follows. Component of the SRB8-11 complex. The SRB8-11 complex is a regulatory module of the Mediator complex which is itself involved in regulation of basal and activated RNA polymerase II-dependent transcription. The SRB8-11 complex may be involved in the transcriptional repression of a subset of genes regulated by Mediator. It may inhibit the association of the Mediator complex with RNA polymerase II to form the holoenzyme complex. The SRB8-11 complex phosphorylates the C-terminal domain (CTD) of the largest subunit of RNA polymerase II. May play a role in signal transduction pathways regulating secondary metabolism and fungal development (conidiation). This Gibberella moniliformis (Maize ear and stalk rot fungus) protein is RNA polymerase II holoenzyme cyclin-like subunit (SSN8).